The following is a 182-amino-acid chain: Receptor activity-modifying protein 2 (182 aa).

The first 45 residues, Met-1–Thr-45, serve as a signal peptide directing secretion. Residues Ser-46–Glu-150 lie on the Extracellular side of the membrane. N-linked (GlcNAc...) asparagine glycosylation is found at Asn-51, Asn-92, and Asn-137. Disulfide bonds link Cys-76/Cys-106 and Cys-91/Cys-138. The chain crosses the membrane as a helical span at residues Asp-151–Val-172. The Cytoplasmic segment spans residues Trp-173–Ala-182.

This sequence belongs to the RAMP family. As to quaternary structure, heterodimer of CALCRL and RAMP2; the interaction forms the receptor complex for adrenomedullin/ADM. Heterodimer of CALCR and RAMP2; interaction forms the AMYR2 receptor complex for calcitonin/CALC and amylin/IAPP.

It localises to the cell membrane. Its function is as follows. Accessory protein that interacts with and modulates the function of G-protein coupled receptors including calcitonin gene-related peptide type 1 receptor (CALCRL) and calcitonin receptor (CALCR). Required for the transport of CALCRL to the plasma membrane. Together with CALCRL, form a receptor complex for adrenomedullin/ADM. Together with CALCR, act as a receptor complex for calcitonin/CT/CALC. Together with CALCR, also act as a receptor complex for amylin/IAPP. In Rattus norvegicus (Rat), this protein is Receptor activity-modifying protein 2.